A 758-amino-acid polypeptide reads, in one-letter code: 5-methyltetrahydropteroyltriglutamate--homocysteine methyltransferase (758 aa).

Residues 17–20 and lysine 117 each bind 5-methyltetrahydropteroyltri-L-glutamate; that span reads RELK. L-homocysteine-binding positions include 434-436 and glutamate 487; that span reads IGS. L-methionine is bound by residues 434–436 and glutamate 487; that span reads IGS. Residues 518–519 and tryptophan 564 each bind 5-methyltetrahydropteroyltri-L-glutamate; that span reads RC. L-homocysteine is bound at residue aspartate 602. Aspartate 602 lines the L-methionine pocket. Glutamate 608 contacts 5-methyltetrahydropteroyltri-L-glutamate. Zn(2+) is bound by residues histidine 644, cysteine 646, and glutamate 668. Residue histidine 697 is the Proton donor of the active site. Zn(2+) is bound at residue cysteine 729.

Belongs to the vitamin-B12 independent methionine synthase family. It depends on Zn(2+) as a cofactor.

The catalysed reaction is 5-methyltetrahydropteroyltri-L-glutamate + L-homocysteine = tetrahydropteroyltri-L-glutamate + L-methionine. It participates in amino-acid biosynthesis; L-methionine biosynthesis via de novo pathway; L-methionine from L-homocysteine (MetE route): step 1/1. Its function is as follows. Catalyzes the transfer of a methyl group from 5-methyltetrahydrofolate to homocysteine resulting in methionine formation. In Yersinia pestis bv. Antiqua (strain Antiqua), this protein is 5-methyltetrahydropteroyltriglutamate--homocysteine methyltransferase.